The chain runs to 648 residues: Biosynthetic arginine decarboxylase (648 aa).

Residue Lys-109 is modified to N6-(pyridoxal phosphate)lysine. 291 to 301 (IDVGGGLGIDF) provides a ligand contact to substrate.

The protein belongs to the Orn/Lys/Arg decarboxylase class-II family. SpeA subfamily. The cofactor is Mg(2+). Requires pyridoxal 5'-phosphate as cofactor.

It catalyses the reaction L-arginine + H(+) = agmatine + CO2. Its pathway is amine and polyamine biosynthesis; agmatine biosynthesis; agmatine from L-arginine: step 1/1. Functionally, catalyzes the biosynthesis of agmatine from arginine. The polypeptide is Biosynthetic arginine decarboxylase (Prochlorococcus marinus (strain MIT 9301)).